The chain runs to 356 residues: Glucose-1-phosphate thymidylyltransferase (356 aa).

Mg(2+) contacts are provided by aspartate 107 and aspartate 221.

The protein belongs to the glucose-1-phosphate thymidylyltransferase family. It depends on Mg(2+) as a cofactor.

It catalyses the reaction dTTP + alpha-D-glucose 1-phosphate + H(+) = dTDP-alpha-D-glucose + diphosphate. It functions in the pathway antibiotic biosynthesis. Functionally, involved in the biosynthesis of the two 2,6-deoxysugars, dTDP-L-oleandrose and dTDP-D-desosamine, attached to the macrolactone ring oleandolide to produce the aglycone antibiotic oleandomycin. Catalyzes the formation of dTDP-glucose from deoxythymidine triphosphate (dTTP) and glucose 1-phosphate. In Streptomyces antibioticus, this protein is Glucose-1-phosphate thymidylyltransferase.